The chain runs to 116 residues: Phosphoribosyl-AMP cyclohydrolase (116 aa).

Aspartate 85 lines the Mg(2+) pocket. A Zn(2+)-binding site is contributed by cysteine 86. Residues aspartate 87 and aspartate 89 each contribute to the Mg(2+) site. Residues cysteine 102 and cysteine 109 each coordinate Zn(2+).

The protein belongs to the PRA-CH family. Homodimer. The cofactor is Mg(2+). Requires Zn(2+) as cofactor.

The protein resides in the cytoplasm. It catalyses the reaction 1-(5-phospho-beta-D-ribosyl)-5'-AMP + H2O = 1-(5-phospho-beta-D-ribosyl)-5-[(5-phospho-beta-D-ribosylamino)methylideneamino]imidazole-4-carboxamide. The protein operates within amino-acid biosynthesis; L-histidine biosynthesis; L-histidine from 5-phospho-alpha-D-ribose 1-diphosphate: step 3/9. Functionally, catalyzes the hydrolysis of the adenine ring of phosphoribosyl-AMP. This Corynebacterium diphtheriae (strain ATCC 700971 / NCTC 13129 / Biotype gravis) protein is Phosphoribosyl-AMP cyclohydrolase.